A 457-amino-acid polypeptide reads, in one-letter code: MNELTGADFKSATADDNKKLFIETYGCQMNVADSEVIASVMQMAGYSVAETLEEADAVFMNTCSIRDNAEQKILNRLEFFHSMKKKKKHLIVGVLGCMAERVKDDLIEHHHVDLVVGPDAYLTLPELIASVEAGEKAMNVELSTTETYRDVIPSRICGNHISGFVSIMRGCNNFCTYCIVPYTRGRERSRDVESILNEVADLVSKGYKEITLLGQNVNSYRFEKEGGEVVTFPMLLRLVAEAAPGIRVRFTTSHPKDMSDETLEVIAQVPNVCKHIHLPVQSGSSRILKLMNRKYTREWYLDRVAAIKRIVPDCGLTTDIFSGFHSETEEDHRESLSLMEACGYDAAFMFKYSERPGTYASKHLEDNVPEEIKVRRLNEIIALQNRLSAESNNRCIGKTYEVLVEGVSKRSRDQLFGRTEQNRVVVFDRGTHRIGDFVNVRITEASSATLKGEEVFS.

The MTTase N-terminal domain maps to 18–133 (KKLFIETYGC…LPELIASVEA (116 aa)). The [4Fe-4S] cluster site is built by C27, C63, C97, C171, C175, and C178. In terms of domain architecture, Radical SAM core spans 157 to 390 (CGNHISGFVS…IALQNRLSAE (234 aa)). Residues 393 to 456 (NRCIGKTYEV…SATLKGEEVF (64 aa)) enclose the TRAM domain.

Belongs to the methylthiotransferase family. MiaB subfamily. In terms of assembly, monomer. Requires [4Fe-4S] cluster as cofactor.

The protein resides in the cytoplasm. It carries out the reaction N(6)-dimethylallyladenosine(37) in tRNA + (sulfur carrier)-SH + AH2 + 2 S-adenosyl-L-methionine = 2-methylsulfanyl-N(6)-dimethylallyladenosine(37) in tRNA + (sulfur carrier)-H + 5'-deoxyadenosine + L-methionine + A + S-adenosyl-L-homocysteine + 2 H(+). Functionally, catalyzes the methylthiolation of N6-(dimethylallyl)adenosine (i(6)A), leading to the formation of 2-methylthio-N6-(dimethylallyl)adenosine (ms(2)i(6)A) at position 37 in tRNAs that read codons beginning with uridine. This chain is tRNA-2-methylthio-N(6)-dimethylallyladenosine synthase, found in Bacteroides fragilis (strain ATCC 25285 / DSM 2151 / CCUG 4856 / JCM 11019 / LMG 10263 / NCTC 9343 / Onslow / VPI 2553 / EN-2).